We begin with the raw amino-acid sequence, 303 residues long: tRNA dimethylallyltransferase (303 aa).

11–18 (GPTGVGKS) contributes to the ATP binding site. A substrate-binding site is contributed by 13-18 (TGVGKS). 2 interaction with substrate tRNA regions span residues 36–39 (DSRQ) and 159–163 (QRVLR).

Belongs to the IPP transferase family. As to quaternary structure, monomer. It depends on Mg(2+) as a cofactor.

It carries out the reaction adenosine(37) in tRNA + dimethylallyl diphosphate = N(6)-dimethylallyladenosine(37) in tRNA + diphosphate. Catalyzes the transfer of a dimethylallyl group onto the adenine at position 37 in tRNAs that read codons beginning with uridine, leading to the formation of N6-(dimethylallyl)adenosine (i(6)A). This chain is tRNA dimethylallyltransferase, found in Lawsonia intracellularis (strain PHE/MN1-00).